The sequence spans 469 residues: 3-isopropylmalate dehydratase large subunit (469 aa).

[4Fe-4S] cluster is bound by residues Cys-350, Cys-410, and Cys-413.

It belongs to the aconitase/IPM isomerase family. LeuC type 1 subfamily. In terms of assembly, heterodimer of LeuC and LeuD. [4Fe-4S] cluster is required as a cofactor.

The catalysed reaction is (2R,3S)-3-isopropylmalate = (2S)-2-isopropylmalate. The protein operates within amino-acid biosynthesis; L-leucine biosynthesis; L-leucine from 3-methyl-2-oxobutanoate: step 2/4. In terms of biological role, catalyzes the isomerization between 2-isopropylmalate and 3-isopropylmalate, via the formation of 2-isopropylmaleate. The sequence is that of 3-isopropylmalate dehydratase large subunit from Rhizobium etli (strain CIAT 652).